We begin with the raw amino-acid sequence, 486 residues long: UDP-N-acetylmuramoyl-L-alanyl-D-glutamate--2,6-diaminopimelate ligase (486 aa).

Serine 31 lines the UDP-N-acetyl-alpha-D-muramoyl-L-alanyl-D-glutamate pocket. 109 to 115 serves as a coordination point for ATP; the sequence is GTNGKTT. UDP-N-acetyl-alpha-D-muramoyl-L-alanyl-D-glutamate contacts are provided by residues asparagine 150, 151-152, serine 178, and arginine 186; that span reads TT. Lysine 218 is modified (N6-carboxylysine). Residues arginine 381, 405-408, glycine 455, and glutamate 459 each bind meso-2,6-diaminopimelate; that span reads DNPR. Residues 405-408 carry the Meso-diaminopimelate recognition motif motif; that stretch reads DNPR.

Belongs to the MurCDEF family. MurE subfamily. It depends on Mg(2+) as a cofactor. In terms of processing, carboxylation is probably crucial for Mg(2+) binding and, consequently, for the gamma-phosphate positioning of ATP.

Its subcellular location is the cytoplasm. The enzyme catalyses UDP-N-acetyl-alpha-D-muramoyl-L-alanyl-D-glutamate + meso-2,6-diaminopimelate + ATP = UDP-N-acetyl-alpha-D-muramoyl-L-alanyl-gamma-D-glutamyl-meso-2,6-diaminopimelate + ADP + phosphate + H(+). It functions in the pathway cell wall biogenesis; peptidoglycan biosynthesis. Its function is as follows. Catalyzes the addition of meso-diaminopimelic acid to the nucleotide precursor UDP-N-acetylmuramoyl-L-alanyl-D-glutamate (UMAG) in the biosynthesis of bacterial cell-wall peptidoglycan. In Halalkalibacterium halodurans (strain ATCC BAA-125 / DSM 18197 / FERM 7344 / JCM 9153 / C-125) (Bacillus halodurans), this protein is UDP-N-acetylmuramoyl-L-alanyl-D-glutamate--2,6-diaminopimelate ligase.